Consider the following 313-residue polypeptide: Ornithine carbamoyltransferase (313 aa).

Residues 57–60 (STRT), Gln-84, Arg-108, and 135–138 (HPTQ) contribute to the carbamoyl phosphate site. Residues Asn-167, Asp-231, and 235–236 (SM) contribute to the L-ornithine site. Carbamoyl phosphate-binding positions include 272-273 (CL) and Arg-300.

Belongs to the aspartate/ornithine carbamoyltransferase superfamily. OTCase family.

It is found in the cytoplasm. It carries out the reaction carbamoyl phosphate + L-ornithine = L-citrulline + phosphate + H(+). Its pathway is amino-acid biosynthesis; L-arginine biosynthesis; L-arginine from L-ornithine and carbamoyl phosphate: step 1/3. Reversibly catalyzes the transfer of the carbamoyl group from carbamoyl phosphate (CP) to the N(epsilon) atom of ornithine (ORN) to produce L-citrulline. This Pseudothermotoga lettingae (strain ATCC BAA-301 / DSM 14385 / NBRC 107922 / TMO) (Thermotoga lettingae) protein is Ornithine carbamoyltransferase.